Here is a 360-residue protein sequence, read N- to C-terminus: Protein Wnt-2 (360 aa).

The signal sequence occupies residues 1–25 (MNAPLCGIWLWLPLLLTWLTPEVSS). Intrachain disulfides connect cysteine 76-cysteine 87, cysteine 127-cysteine 135, cysteine 137-cysteine 157, cysteine 206-cysteine 220, cysteine 208-cysteine 215, cysteine 278-cysteine 309, cysteine 294-cysteine 304, cysteine 308-cysteine 348, cysteine 324-cysteine 339, cysteine 326-cysteine 336, and cysteine 331-cysteine 332. Serine 212 is lipidated: O-palmitoleoyl serine; by PORCN. Asparagine 295 carries an N-linked (GlcNAc...) asparagine glycan.

This sequence belongs to the Wnt family. Post-translationally, palmitoleoylation is required for efficient binding to frizzled receptors. Depalmitoleoylation leads to Wnt signaling pathway inhibition.

The protein localises to the secreted. It localises to the extracellular space. It is found in the extracellular matrix. Its function is as follows. Ligand for members of the frizzled family of seven transmembrane receptors. Functions in the canonical Wnt signaling pathway that results in activation of transcription factors of the TCF/LEF family. Functions as a upstream regulator of FGF10 expression. Plays an important role in embryonic lung development. May contribute to embryonic brain development by regulating the proliferation of dopaminergic precursors and neurons. The chain is Protein Wnt-2 (WNT2) from Otolemur garnettii (Small-eared galago).